The primary structure comprises 138 residues: Gamma-glutamylaminecyclotransferase (138 aa).

The active-site Proton acceptor is Glu-63.

This sequence belongs to the gamma-glutamylcyclotransferase family.

The enzyme catalyses epsilon-(gamma-L-glutamyl)-L-lysine = 5-oxo-L-proline + L-lysine. Functionally, may contribute to degradation of proteins cross-linked by transglutaminases by degrading the cross-link between a lysine and a glutamic acid residue. Catalyzes the formation of 5-oxo-L-proline from L-gamma-glutamyl-L-epsilon-lysine. The chain is Gamma-glutamylaminecyclotransferase (ggact) from Xenopus laevis (African clawed frog).